A 122-amino-acid polypeptide reads, in one-letter code: Structural protein p14.5 (122 aa).

Disordered regions lie at residues 1-27 and 73-122; these read MADFNSPIQYLKEDSRDRTSIGSLEYD and EDNN…HKSK. Alanine 2 bears the N-acetylalanine; by host mark. The span at 105–122 shows a compositional bias: basic residues; sequence KPKKKKHLFPKLSSHKSK.

Belongs to the asfivirus structural protein p14.5 family. In terms of assembly, interacts with the major capsid protein. Interacts with host IRF3; this interaction interferes with the recruitment of IRF3 to TBK1. Acetylated.

The protein resides in the virion. Functionally, structural protein required for transport of intracellular particles from the assembly sites to the plasma membrane. Binds to both ssDNA and dsDNA. Suppressed the activation of the cGAS/STING pathway by interfering with the recruitment of IRF3 to TBK1, which in turn suppresses IRF3 phosphorylation, decreasing interferon production. In African swine fever virus (isolate Warthog/Namibia/Wart80/1980) (ASFV), this protein is Structural protein p14.5.